Consider the following 506-residue polypeptide: Probable cytosol aminopeptidase (506 aa).

Mn(2+) is bound by residues K278 and D283. K290 is a catalytic residue. Residues D301, D360, and E362 each contribute to the Mn(2+) site. The active site involves R364.

This sequence belongs to the peptidase M17 family. The cofactor is Mn(2+).

The protein resides in the cytoplasm. The enzyme catalyses Release of an N-terminal amino acid, Xaa-|-Yaa-, in which Xaa is preferably Leu, but may be other amino acids including Pro although not Arg or Lys, and Yaa may be Pro. Amino acid amides and methyl esters are also readily hydrolyzed, but rates on arylamides are exceedingly low.. It carries out the reaction Release of an N-terminal amino acid, preferentially leucine, but not glutamic or aspartic acids.. Functionally, presumably involved in the processing and regular turnover of intracellular proteins. Catalyzes the removal of unsubstituted N-terminal amino acids from various peptides. The polypeptide is Probable cytosol aminopeptidase (Ralstonia nicotianae (strain ATCC BAA-1114 / GMI1000) (Ralstonia solanacearum)).